Reading from the N-terminus, the 335-residue chain is Deoxyhypusine hydroxylase (335 aa).

HEAT-like PBS-type repeat units lie at residues Leu71–Asp97, Cys104–Asn130, Gln200–Asp233, Phe238–Asp264, and Val271–Asp298. His73, Glu74, His106, and Glu107 together coordinate Fe cation. Residues His240, Glu241, His273, and Glu274 each coordinate Fe cation.

This sequence belongs to the deoxyhypusine hydroxylase family. Requires Fe(2+) as cofactor.

The protein resides in the cytoplasm. The protein localises to the nucleus. The catalysed reaction is [eIF5A protein]-deoxyhypusine + AH2 + O2 = [eIF5A protein]-hypusine + A + H2O. Its pathway is protein modification; eIF5A hypusination. Its function is as follows. Catalyzes the hydroxylation of the N(6)-(4-aminobutyl)-L-lysine intermediate to form hypusine, an essential post-translational modification only found in mature eIF-5A factor. This Aspergillus clavatus (strain ATCC 1007 / CBS 513.65 / DSM 816 / NCTC 3887 / NRRL 1 / QM 1276 / 107) protein is Deoxyhypusine hydroxylase (lia1).